A 105-amino-acid polypeptide reads, in one-letter code: Flagellar transcriptional regulator FlhD (105 aa).

The protein belongs to the FlhD family. In terms of assembly, homodimer; disulfide-linked. Forms a heterohexamer composed of two FlhC and four FlhD subunits. Each FlhC binds a FlhD dimer, forming a heterotrimer, and a hexamer assembles by dimerization of two heterotrimers.

It localises to the cytoplasm. Functions in complex with FlhC as a master transcriptional regulator that regulates transcription of several flagellar and non-flagellar operons by binding to their promoter region. Activates expression of class 2 flagellar genes, including fliA, which is a flagellum-specific sigma factor that turns on the class 3 genes. Also regulates genes whose products function in a variety of physiological pathways. This Ralstonia pickettii (strain 12J) protein is Flagellar transcriptional regulator FlhD.